The chain runs to 216 residues: 2,5-diamino-6-ribosylamino-4(3H)-pyrimidinone 5'-phosphate reductase (216 aa).

NADP(+) is bound by residues threonine 51, aspartate 55, 79–82 (SMAR), valine 126, and 148–151 (GSTL).

Belongs to the HTP reductase family. Homodimer.

It catalyses the reaction 2,5-diamino-6-(1-D-ribitylamino)pyrimidin-4(3H)-one 5'-phosphate + NADP(+) = 2,5-diamino-6-(1-D-ribosylamino)pyrimidin-4(3H)-one 5'-phosphate + NADPH + H(+). The catalysed reaction is 2,5-diamino-6-(1-D-ribitylamino)pyrimidin-4(3H)-one 5'-phosphate + NAD(+) = 2,5-diamino-6-(1-D-ribosylamino)pyrimidin-4(3H)-one 5'-phosphate + NADH + H(+). The protein operates within cofactor biosynthesis; riboflavin biosynthesis. In terms of biological role, catalyzes an early step in riboflavin biosynthesis, the NADPH-dependent reduction of the ribose side chain of 2,5-diamino-6-ribosylamino-4(3H)-pyrimidinone 5'-phosphate, yielding 2,5-diamino-6-ribitylamino-4(3H)-pyrimidinone 5'-phosphate. In Methanothermobacter thermautotrophicus (strain ATCC 29096 / DSM 1053 / JCM 10044 / NBRC 100330 / Delta H) (Methanobacterium thermoautotrophicum), this protein is 2,5-diamino-6-ribosylamino-4(3H)-pyrimidinone 5'-phosphate reductase.